The primary structure comprises 129 residues: Glycine cleavage system H protein (129 aa).

In terms of domain architecture, Lipoyl-binding spans 24-106; sequence IAVIGITAYA…YGDGWLIKVR (83 aa). Lys65 is subject to N6-lipoyllysine.

This sequence belongs to the GcvH family. In terms of assembly, the glycine cleavage system is composed of four proteins: P, T, L and H. (R)-lipoate serves as cofactor.

In terms of biological role, the glycine cleavage system catalyzes the degradation of glycine. The H protein shuttles the methylamine group of glycine from the P protein to the T protein. The chain is Glycine cleavage system H protein from Synechococcus sp. (strain JA-3-3Ab) (Cyanobacteria bacterium Yellowstone A-Prime).